The chain runs to 319 residues: Glutathione synthetase (319 aa).

The ATP-grasp domain maps to 127 to 311 (KIFVTEFADL…VASLLWDAIE (185 aa)). 153–209 (RNEMGDIILKPLYGNGGAGVFHSARDDRNFSSLLEMFGQMFREPYIAQEYLPDVRKG) contributes to the ATP binding site. Mg(2+)-binding residues include E282 and N284.

It belongs to the prokaryotic GSH synthase family. The cofactor is Mg(2+). Requires Mn(2+) as cofactor.

It carries out the reaction gamma-L-glutamyl-L-cysteine + glycine + ATP = glutathione + ADP + phosphate + H(+). Its pathway is sulfur metabolism; glutathione biosynthesis; glutathione from L-cysteine and L-glutamate: step 2/2. This Agrobacterium fabrum (strain C58 / ATCC 33970) (Agrobacterium tumefaciens (strain C58)) protein is Glutathione synthetase.